Consider the following 79-residue polypeptide: Small ribosomal subunit protein bS16 (79 aa).

The protein belongs to the bacterial ribosomal protein bS16 family.

The chain is Small ribosomal subunit protein bS16 from Solidesulfovibrio magneticus (strain ATCC 700980 / DSM 13731 / RS-1) (Desulfovibrio magneticus).